Here is a 1755-residue protein sequence, read N- to C-terminus: Transposon Ty1-GR3 Gag-Pol polyprotein (1755 aa).

3 stretches are compositionally biased toward polar residues: residues 1-10 (MESQQLSNYP), 48-60 (TKANSQQTTTPAS), and 127-152 (QSQFPQYPSSVGTPLSTPSPESGNTF). Disordered regions lie at residues 1–93 (MESQ…MMTQ), 126–173 (PQSQ…RPPP), and 352–421 (GSRN…SKST). Over residues 153-165 (TDSSSADSDMTST) the composition is skewed to low complexity. The segment at 299 to 401 (NNGIHINNKV…NSKSKTARAH (103 aa)) is RNA-binding. The segment covering 402–418 (NVSTSNNSPSTDNDSIS) has biased composition (low complexity). Ser416 is subject to Phosphoserine. Asp461 functions as the For protease activity; shared with dimeric partner in the catalytic mechanism. The interval 583–640 (NVHTSESTRKYPYPFIHRMLAHANAQTIRYSLKNNTITYFNESDVDWSSAIDYQCPDC) is integrase-type zinc finger-like. Residues 660–835 (NSYEPFQYLH…AGLDISTLLP (176 aa)) form the Integrase catalytic domain. Residues Asp671 and Asp736 each contribute to the Mg(2+) site. Residues 956–1172 (SKAVSPTDST…LGGIGDSNAY (217 aa)) form a disordered region. The segment covering 960–969 (SPTDSTPPST) has biased composition (low complexity). 2 stretches are compositionally biased toward polar residues: residues 1005-1015 (STPQISNIEST) and 1031-1043 (MSQSNTHESSYAS). Residues 1044-1053 (KSKDFRHSDS) are compositionally biased toward basic and acidic residues. Polar residues-rich tracts occupy residues 1054–1082 (YSDNETNHTNVPISSTGGTNNKTVPQTSE) and 1095–1106 (SIDTSSSESNSL). Residues 1178–1212 (KKRSLEDNETEIKVSRDTWNTKNMRSLEPPRSKKR) carry the Bipartite nuclear localization signal motif. The Reverse transcriptase Ty1/copia-type domain occupies 1338–1476 (NNYYITQLDI…DILGLEIKYQ (139 aa)). Mg(2+) contacts are provided by Asp1346, Asp1427, Asp1428, Asp1610, Glu1652, and Asp1685. The RNase H Ty1/copia-type domain maps to 1610–1752 (DASYGNQPYY…IKTFKLLTNK (143 aa)).

The capsid protein forms a homotrimer, from which the VLPs are assembled. The protease is a homodimer, whose active site consists of two apposed aspartic acid residues. Initially, virus-like particles (VLPs) are composed of the structural unprocessed proteins Gag and Gag-Pol, and also contain the host initiator methionine tRNA (tRNA(i)-Met) which serves as a primer for minus-strand DNA synthesis, and a dimer of genomic Ty RNA. Processing of the polyproteins occurs within the particle and proceeds by an ordered pathway, called maturation. First, the protease (PR) is released by autocatalytic cleavage of the Gag-Pol polyprotein yielding capsid protein p45 and a Pol-p154 precursor protein. This cleavage is a prerequisite for subsequent processing of Pol-p154 at the remaining sites to release the mature structural and catalytic proteins. Maturation takes place prior to the RT reaction and is required to produce transposition-competent VLPs.

It localises to the cytoplasm. The protein resides in the nucleus. It carries out the reaction DNA(n) + a 2'-deoxyribonucleoside 5'-triphosphate = DNA(n+1) + diphosphate. The enzyme catalyses Endonucleolytic cleavage to 5'-phosphomonoester.. Capsid protein (CA) is the structural component of the virus-like particle (VLP), forming the shell that encapsulates the retrotransposons dimeric RNA genome. The particles are assembled from trimer-clustered units and there are holes in the capsid shells that allow for the diffusion of macromolecules. CA also has nucleocapsid-like chaperone activity, promoting primer tRNA(i)-Met annealing to the multipartite primer-binding site (PBS), dimerization of Ty1 RNA and initiation of reverse transcription. In terms of biological role, the aspartyl protease (PR) mediates the proteolytic cleavages of the Gag and Gag-Pol polyproteins after assembly of the VLP. Its function is as follows. Reverse transcriptase/ribonuclease H (RT) is a multifunctional enzyme that catalyzes the conversion of the retro-elements RNA genome into dsDNA within the VLP. The enzyme displays a DNA polymerase activity that can copy either DNA or RNA templates, and a ribonuclease H (RNase H) activity that cleaves the RNA strand of RNA-DNA heteroduplexes during plus-strand synthesis and hydrolyzes RNA primers. The conversion leads to a linear dsDNA copy of the retrotransposon that includes long terminal repeats (LTRs) at both ends. Functionally, integrase (IN) targets the VLP to the nucleus, where a subparticle preintegration complex (PIC) containing at least integrase and the newly synthesized dsDNA copy of the retrotransposon must transit the nuclear membrane. Once in the nucleus, integrase performs the integration of the dsDNA into the host genome. The protein is Transposon Ty1-GR3 Gag-Pol polyprotein (TY1B-GR3) of Saccharomyces cerevisiae (strain ATCC 204508 / S288c) (Baker's yeast).